A 160-amino-acid polypeptide reads, in one-letter code: uncharacterized protein (160 aa).

One can recognise an N-acetyltransferase domain in the interval 5-160 (ISLSFYKPEH…GEQLILHHFL (156 aa)).

This is an uncharacterized protein from Bacillus subtilis (strain 168).